The sequence spans 251 residues: Aliphatic sulfonates import ATP-binding protein SsuB (251 aa).

Residues 19–238 (GELRHVDKWY…PGEPGAHTER (220 aa)) enclose the ABC transporter domain. ATP is bound at residue 51–58 (GRSGSGKS).

This sequence belongs to the ABC transporter superfamily. Aliphatic sulfonates importer (TC 3.A.1.17.2) family. As to quaternary structure, the complex is composed of two ATP-binding proteins (SsuB), two transmembrane proteins (SsuC) and a solute-binding protein (SsuA).

It is found in the cell membrane. It carries out the reaction ATP + H2O + aliphatic sulfonate-[sulfonate-binding protein]Side 1 = ADP + phosphate + aliphatic sulfonateSide 2 + [sulfonate-binding protein]Side 1.. Functionally, part of the ABC transporter complex SsuABC involved in aliphatic sulfonates import. Responsible for energy coupling to the transport system. This is Aliphatic sulfonates import ATP-binding protein SsuB from Mycobacterium avium (strain 104).